A 113-amino-acid chain; its full sequence is Dynein light chain Tctex-type 1 (113 aa).

The residue at position 1 (methionine 1) is an N-acetylmethionine. Residues 41-113 form an interaction with GNB1 region; it reads QWTTNVLEQT…CIVSTFGLSI (73 aa).

Belongs to the dynein light chain Tctex-type family. Homodimer. The cytoplasmic dynein 1 complex consists of two catalytic heavy chains (HCs) and a number of non-catalytic subunits presented by intermediate chains (ICs), light intermediate chains (LICs) and light chains (LCs); the composition seems to vary in respect to the IC, LIC and LC composition. The heavy chain homodimer serves as a scaffold for the probable homodimeric assembly of the respective non-catalytic subunits. The ICs and LICs bind directly to the HC dimer and the LCs assemble on the IC dimer. DYNLT1 and DYNLT3 compete for association with dynein IC (DYNC1I1 or DYNC1I2). Self-associates. Interacts with RHO. Interacts with DYNC1I1 and DYNC1I2. Interacts with DOC2A, DOC2B and SCN10A. Interacts with PVR. Interacts with SVIL isoform 2. Interacts with GNB1; the interaction occurs in presence of guanine nucleotide-binding protein G(T) subunit gamma; the interaction diminishes the association of DYNLT1 with dynein IC (DYNC1I1 or DYNC1I2). Interacts with GNB2, GNB3 and GNB5; the interactions occur in presence of guanine nucleotide-binding protein G(T) subunit gamma. Interacts with ACVR2B and ARHGEF2. Interacts with DNAI4. Interacts with CFAP61. In terms of processing, phosphorylated by BMPR2. The phosphorylation status is proposed to regulate the association with the cytoplasmic dynein complex and may have role in cytoplasmic dynein cargo release. High level in testis (germ cell-specific). Expressed in sperm (at protein level). 200-fold lower in liver, brain, heart, spleen, and kidney. Levels in thymus and two embryonal carcinoma cell lines were several-fold higher than this low constitutive level.

It localises to the golgi apparatus. The protein localises to the cytoplasm. Its subcellular location is the cytoskeleton. It is found in the spindle. In terms of biological role, acts as one of several non-catalytic accessory components of the cytoplasmic dynein 1 complex that are thought to be involved in linking dynein to cargos and to adapter proteins that regulate dynein function. Cytoplasmic dynein 1 acts as a motor for the intracellular retrograde motility of vesicles and organelles along microtubules. Binds to transport cargos and is involved in apical cargo transport such as rhodopsin-bearing vesicles in polarized epithelia. May also be a accessory component of axonemal dynein. Plays an important role in male germ cell development and function. Candidate for involvement in male sterility. Plays a role in neuronal morphogenesis; the function is independent of cytoplasmic dynein and seems to be coupled to regulation of the actin cytoskeleton by enhancing Rac1 activity. The function in neurogenesis may be regulated by association with a G-protein beta-gamma dimer. May function as a receptor-independent activator of heterotrimeric G-protein signaling; the activation appears to be independent of a nucleotide exchange. Plays a role in regulating neurogenesis; inhibits the genesis of neurons from precursor cells during cortical development presumably by antagonizing ARHGEF2. Unrelated to the role in retrograde microtubule-associated movement may play a role in the dimerization of cytoplasmic proteins/domains such as for ACVR2B. Binds to the cytoplasmic domain of ACVR2B and, in vitro, inhibits ACVR2B signaling. Involved in the regulation of mitotic spindle orientation. The chain is Dynein light chain Tctex-type 1 (Dynlt1) from Mus musculus (Mouse).